Here is a 57-residue protein sequence, read N- to C-terminus: Defensin-like protein 302 (57 aa).

3 disulfide bridges follow: C19–C39, C26–C44, and C32–C46.

This sequence belongs to the DEFL family.

The protein is Defensin-like protein 302 of Arabidopsis thaliana (Mouse-ear cress).